The following is a 116-amino-acid chain: Tachykinin-3 (116 aa).

The signal sequence occupies residues 1–20; it reads MRSAMLFAAVLALSLAWTFG. Positions 21–79 are excised as a propeptide; it reads AACEEPQEQGGRLSKDSDLSLLPPPLLRRLYDSRSISLEGLLKVLSKASVGPKETSLPQ. Met91 bears the Methionine amide mark. The segment at 92-116 is disordered; it reads GKRNSQPDTPADVVEENTPSFGVLK. A propeptide spanning residues 95–116 is cleaved from the precursor; sequence NSQPDTPADVVEENTPSFGVLK.

The protein belongs to the tachykinin family.

The protein localises to the secreted. Its function is as follows. Tachykinins are active peptides which excite neurons, evoke behavioral responses, are potent vasodilators and secretagogues, and contract (directly or indirectly) many smooth muscles. Is a critical central regulator of gonadal function. The protein is Tachykinin-3 (Tac3) of Rattus norvegicus (Rat).